Reading from the N-terminus, the 254-residue chain is Glycerol operon regulatory protein (254 aa).

The region spanning 5 to 67 (IQSLERAAAM…PASGRYQLGA (63 aa)) is the HTH iclR-type domain. Positions 27–46 (LSDIASTLGLAKGTAHGILR) form a DNA-binding region, H-T-H motif. The IclR-ED domain occupies 82-251 (LRARALVWTD…AAAVSRDLGA (170 aa)).

Its function is as follows. May be an activator protein for the gylABX operon. The protein is Glycerol operon regulatory protein (gylR) of Streptomyces griseus.